The following is a 763-amino-acid chain: Phosphoglycerol transferase I (763 aa).

The next 4 helical transmembrane spans lie at 1 to 21, 26 to 46, 77 to 97, and 108 to 128; these read MSEL…AWKA, WWFA…ITLY, ILPG…LGWI, and VGYS…SPAF.

It belongs to the OpgB family.

It is found in the cell inner membrane. It carries out the reaction a phosphatidylglycerol + a membrane-derived-oligosaccharide D-glucose = a 1,2-diacyl-sn-glycerol + a membrane-derived-oligosaccharide 6-(glycerophospho)-D-glucose.. Its pathway is glycan metabolism; osmoregulated periplasmic glucan (OPG) biosynthesis. In terms of biological role, transfers a phosphoglycerol residue from phosphatidylglycerol to the membrane-bound nascent glucan backbones. The protein is Phosphoglycerol transferase I of Salmonella newport (strain SL254).